We begin with the raw amino-acid sequence, 694 residues long: MAREYKIEDYRNFGIMAHIDAGKTTMTERILFYTGKNHKIGETHDGASTMDWMEQEQERGITITSAATTTFWHGRDGKKRRFNIIDTPGHVDFTIEVERSLRVLDGAIALLDANAGVEPQTETVWRQAEKYHVPRMVFVNKMDKIGADFYRSVEMVGSRLGAVALPVQLPIGAENDFVGVVDLIEMKALTWDGTIGAPATVGEIPADMADKAEEYREKLIELAVEIDEAAMEAYLEGTMPTNDELRALIRKGTIEVKFHPILCGTAFKNRGVQPLLDAVVEFLPAPTDVPAIKGIDVKTETETTRESSDEAPLSMLAFKIMNDPFVGSLTFARIYSGKLTKGVSLENTVKGKRERIGRMLQMHSNSREDIDEAFAGDIVALAGLKETTTGDTLCDPLKPVILERMEFPDPVIEIAIEPKTKADQEKMGIALNRLAAEDPSFRVKSDEESGQTIIAGMGELHLDILVDRMKREFKVEANAGAPQVAYRESITRAAEIDYTHKKQSGGSGQFARVKIIFEPHDGDDFIFESKIVGGSVPKEYIPGVQKGIESVMGAGPLAGFPMLGVKATLIDGAYHDVDSSVLAFEIASRAAFREGAQKAGAQLLEPIMKVEVVTPEDYVGDVIGDLNSRRGQISGTEARGIATVVNAMVPLANMFGYVNSLRSMSQGRAQYTMQFDHYEPVPTAVAQEIQKKFA.

The tr-type G domain occupies 8–287 (EDYRNFGIMA…AVVEFLPAPT (280 aa)). GTP is bound by residues 17-24 (AHIDAGKT), 86-90 (DTPGH), and 140-143 (NKMD).

It belongs to the TRAFAC class translation factor GTPase superfamily. Classic translation factor GTPase family. EF-G/EF-2 subfamily.

Its subcellular location is the cytoplasm. Functionally, catalyzes the GTP-dependent ribosomal translocation step during translation elongation. During this step, the ribosome changes from the pre-translocational (PRE) to the post-translocational (POST) state as the newly formed A-site-bound peptidyl-tRNA and P-site-bound deacylated tRNA move to the P and E sites, respectively. Catalyzes the coordinated movement of the two tRNA molecules, the mRNA and conformational changes in the ribosome. In Brucella suis (strain ATCC 23445 / NCTC 10510), this protein is Elongation factor G.